The following is a 404-amino-acid chain: Tryptophan synthase beta chain (404 aa).

Lys94 is subject to N6-(pyridoxal phosphate)lysine.

Belongs to the TrpB family. As to quaternary structure, tetramer of two alpha and two beta chains. The cofactor is pyridoxal 5'-phosphate.

It catalyses the reaction (1S,2R)-1-C-(indol-3-yl)glycerol 3-phosphate + L-serine = D-glyceraldehyde 3-phosphate + L-tryptophan + H2O. It functions in the pathway amino-acid biosynthesis; L-tryptophan biosynthesis; L-tryptophan from chorismate: step 5/5. The beta subunit is responsible for the synthesis of L-tryptophan from indole and L-serine. The chain is Tryptophan synthase beta chain from Staphylococcus saprophyticus subsp. saprophyticus (strain ATCC 15305 / DSM 20229 / NCIMB 8711 / NCTC 7292 / S-41).